We begin with the raw amino-acid sequence, 223 residues long: Cytidylate kinase (223 aa).

The disordered stretch occupies residues methionine 1–arginine 23. Residue glycine 12–serine 20 coordinates ATP.

It belongs to the cytidylate kinase family. Type 1 subfamily.

Its subcellular location is the cytoplasm. The catalysed reaction is CMP + ATP = CDP + ADP. The enzyme catalyses dCMP + ATP = dCDP + ADP. The sequence is that of Cytidylate kinase from Cutibacterium acnes (strain DSM 16379 / KPA171202) (Propionibacterium acnes).